A 192-amino-acid polypeptide reads, in one-letter code: MLIVLLALLLLSCSPKYKIVKEYVLPQNTLCVQDCKEKFLECKKACFESYNACLKESVERARKVYLSLLKDYERKSREYEKAYENYLKELRTYRETLYRIKEDLKFYERICSAYKDKEACDKKEWLKKRIRFYERRKPLPPQKPTMPSYEILLKREREACSCECGCEKLYDACFESCRGKVRIKKVCVENCD.

A coiled-coil region spans residues 53–111 (CLKESVERARKVYLSLLKDYERKSREYEKAYENYLKELRTYRETLYRIKEDLKFYERIC).

This is an uncharacterized protein from Aquifex aeolicus (strain VF5).